The chain runs to 264 residues: Small ribosomal subunit protein eS1 (264 aa).

The tract at residues 233-264 (GEGGGAGKPAGDETGAKVERADGYEPPVQESV) is disordered. Positions 242 to 255 (AGDETGAKVERADG) are enriched in basic and acidic residues.

Belongs to the eukaryotic ribosomal protein eS1 family. In terms of assembly, component of the small ribosomal subunit. Mature ribosomes consist of a small (40S) and a large (60S) subunit. The 40S subunit contains about 33 different proteins and 1 molecule of RNA (18S). The 60S subunit contains about 49 different proteins and 3 molecules of RNA (28S, 5.8S and 5S). Part of the small subunit (SSU) processome, composed of more than 70 proteins and the RNA chaperone small nucleolar RNA (snoRNA) U3.

It is found in the cytoplasm. The protein localises to the nucleus. Its subcellular location is the nucleolus. Functionally, component of the small ribosomal subunit. The ribosome is a large ribonucleoprotein complex responsible for the synthesis of proteins in the cell. Part of the small subunit (SSU) processome, first precursor of the small eukaryotic ribosomal subunit. During the assembly of the SSU processome in the nucleolus, many ribosome biogenesis factors, an RNA chaperone and ribosomal proteins associate with the nascent pre-rRNA and work in concert to generate RNA folding, modifications, rearrangements and cleavage as well as targeted degradation of pre-ribosomal RNA by the RNA exosome. May play a role during erythropoiesis. The protein is Small ribosomal subunit protein eS1 (rps3a) of Xenopus tropicalis (Western clawed frog).